Here is a 1055-residue protein sequence, read N- to C-terminus: MEDDAPKHIIQMTGFKVEEKEALGKLLLKLDCTFIKSEKYKNCTHLIAERLCKSEKFLAACAAGKWVLTKDYIIHSAQSGRWLDETTYEWGYKIEKDSHYSPQMQSAPKRWREELKRTGAPGAFHKWKVVLLVRADKRSDSLVRVLEAGKANVILPKNSPTGITHVIASNARIKAEQEKDDFKAPFYPIQYLEDFLLEKEIHNDEDSQTNSTWKNHSSQEKSNDFRENMGFLEMKGTLKETMCRTQKEMKNHDEDVTISSILTEHQSKERFRDSRKNLKFVKMRNALGRHTYRNQEMKKKDEDIQSIYTLRKKRKKEKERDSRKDIEHDRSTLRKHIYRDQKERKNSVFAGHAKESKTKDIRTNVDIVDLKNALRKHIYRAQAVRYRGIRIDKQPAYNVEVKNAEFPRGILNLIESLIEGQFFKEAIEELSSLQAHYIPPVYLLHALLENILQDNIDTFSGRYFHILSALLHLHPPWKSPAMSTYYLELFQCPTCMKGTWSLIEVLIRSCLFNESFCHQISENIIGSKVLHLTLLKFFFNLIESEVRHLSQKLYDWSDSQSLKITGKAVLLEIFWSGNETSGLLTKPVNMLLEWTIYSHKEKCKSNDVFRHELAYLLTGILGAAIDYWIVLGLNMGRNVMRHMSDDVGSYVSLSCDDFSSQDLEIFISSFSSSWLQMFVAEAVFKKLCLQNSISISSEPLSLQKMVYSYLPALGKTGVRGTRKMQKPKKIGLRPCFESQRALIMLNGAKQKQGEGLPEIPELNLAKCSSSLKRLKKKSEGELSCSKENCPSLVTKINFHKTNLKGETALHRACINNQVDRLILLLSMPGIDINVKDNAGWTPLHEACNYGNTVCVQEILQRCPEVDLLTQVDGVTPLHDALSNGHVEIGKLLLQHGGPVLLQQRNSKGELPLDYVVSSQIKEELFAITKIEDTVENFHAQAEKHFYHQQLEFGSFLLSRMLLNFCSIFGLSSESLAFKGLTHLSELLIACQNYKETTSVHTDWLLDLYARNIMTLQKLPNALKELPENVKVCPGVHTEALLVTLEVMCRSVTEIS.

2 BRCT domains span residues 2-80 and 121-199; these read EDDA…AQSG and PGAF…LLEK. The disordered stretch occupies residues 312–332; the sequence is KKRKKEKERDSRKDIEHDRST. The span at 318 to 332 shows a compositional bias: basic and acidic residues; that stretch reads KERDSRKDIEHDRST. An NSE5-like domain; mediates interaction with SLF2 region spans residues 407–1055; the sequence is PRGILNLIES…VMCRSVTEIS (649 aa). 3 ANK repeats span residues 804–834, 838–867, and 872–901; these read KGET…DINV, AGWT…EVDL, and DGVT…PVLL. Lys-929 is covalently cross-linked (Glycyl lysine isopeptide (Lys-Gly) (interchain with G-Cter in SUMO2)).

Interacts (via N-terminus) with SLF2; this interaction links RAD18 to the SMC5-SMC6 complex. Interacts (via BRCT domains) with RAD18; this interaction occurs in a SLF2-independent manner. Interacts with SMC6. Interacts (via BRCT domains) with RAD18 (via C-terminus and phosphorylated form); this interaction is required for efficient repair of UV-induced DNA damage.

The protein resides in the nucleus. The protein localises to the cytoplasm. It is found in the cytoskeleton. It localises to the microtubule organizing center. Its subcellular location is the centrosome. In terms of biological role, plays a role in the DNA damage response (DDR) pathway by regulating postreplication repair of UV-damaged DNA and genomic stability maintenance. The SLF1-SLF2 complex acts to link RAD18 with the SMC5-SMC6 complex at replication-coupled interstrand cross-links (ICL) and DNA double-strand breaks (DSBs) sites on chromatin during DNA repair in response to stalled replication forks. Promotes the recruitment of SLF2 and the SMC5-SMC6 complex to DNA lesions. The sequence is that of SMC5-SMC6 complex localization factor protein 1 from Bos taurus (Bovine).